The following is a 572-amino-acid chain: 2-succinyl-5-enolpyruvyl-6-hydroxy-3-cyclohexene-1-carboxylate synthase (572 aa).

It belongs to the TPP enzyme family. MenD subfamily. In terms of assembly, homodimer. Requires Mg(2+) as cofactor. Mn(2+) serves as cofactor. The cofactor is thiamine diphosphate.

It catalyses the reaction isochorismate + 2-oxoglutarate + H(+) = 5-enolpyruvoyl-6-hydroxy-2-succinyl-cyclohex-3-ene-1-carboxylate + CO2. The protein operates within quinol/quinone metabolism; 1,4-dihydroxy-2-naphthoate biosynthesis; 1,4-dihydroxy-2-naphthoate from chorismate: step 2/7. Its pathway is quinol/quinone metabolism; menaquinone biosynthesis. In terms of biological role, catalyzes the thiamine diphosphate-dependent decarboxylation of 2-oxoglutarate and the subsequent addition of the resulting succinic semialdehyde-thiamine pyrophosphate anion to isochorismate to yield 2-succinyl-5-enolpyruvyl-6-hydroxy-3-cyclohexene-1-carboxylate (SEPHCHC). The sequence is that of 2-succinyl-5-enolpyruvyl-6-hydroxy-3-cyclohexene-1-carboxylate synthase from Shewanella amazonensis (strain ATCC BAA-1098 / SB2B).